Reading from the N-terminus, the 202-residue chain is IMP cyclohydrolase (202 aa).

This sequence belongs to the archaeal IMP cyclohydrolase family.

The catalysed reaction is IMP + H2O = 5-formamido-1-(5-phospho-D-ribosyl)imidazole-4-carboxamide. It functions in the pathway purine metabolism; IMP biosynthesis via de novo pathway; IMP from 5-formamido-1-(5-phospho-D-ribosyl)imidazole-4-carboxamide: step 1/1. In terms of biological role, catalyzes the cyclization of 5-formylamidoimidazole-4-carboxamide ribonucleotide to IMP. This Methanosphaera stadtmanae (strain ATCC 43021 / DSM 3091 / JCM 11832 / MCB-3) protein is IMP cyclohydrolase.